Consider the following 318-residue polypeptide: MAILEQPYLDLINKIMIEGHDKNDRTGTGTRSYFGAQMRFDLSKGFPILTTKKVPFGLIKSELLWFLRGDTNIRFLLEHKNHIWDEWAFKNWVNSDEYTGPDMTDFGLRSQSDPEFNKIYQAELKKFDRRILDDENFAKKYGNLGDVYGAQWRHWQKRDGSFIDQIENVIEQIKNNPDSRRMIVTAWNPEDVPTSALPPCHVMFQFYVVDGKISVQLYQRSGDMFLGVPFNIASYALLLNMIARETGLQVGEFIHTLGDAHIYSNHFSQVKEMLSRKPYESPQLWLNPEKKHIEDFDMQDIKLVDYKHHGTIKAPVAV.

Residues R25 and 180–181 (RR) each bind dUMP. C200 serves as the catalytic Nucleophile. DUMP-binding positions include 220–223 (RSGD), N231, and 261–263 (HIY). D223 is a binding site for (6R)-5,10-methylene-5,6,7,8-tetrahydrofolate. A317 lines the (6R)-5,10-methylene-5,6,7,8-tetrahydrofolate pocket.

The protein belongs to the thymidylate synthase family. Bacterial-type ThyA subfamily. In terms of assembly, homodimer.

It is found in the cytoplasm. It catalyses the reaction dUMP + (6R)-5,10-methylene-5,6,7,8-tetrahydrofolate = 7,8-dihydrofolate + dTMP. Its pathway is pyrimidine metabolism; dTTP biosynthesis. In terms of biological role, catalyzes the reductive methylation of 2'-deoxyuridine-5'-monophosphate (dUMP) to 2'-deoxythymidine-5'-monophosphate (dTMP) while utilizing 5,10-methylenetetrahydrofolate (mTHF) as the methyl donor and reductant in the reaction, yielding dihydrofolate (DHF) as a by-product. This enzymatic reaction provides an intracellular de novo source of dTMP, an essential precursor for DNA biosynthesis. The protein is Thymidylate synthase of Lactobacillus acidophilus (strain ATCC 700396 / NCK56 / N2 / NCFM).